The chain runs to 348 residues: 3'-dehydrocarminate deglycosidase alpha subunit (348 aa).

E145 is a binding site for Mg(2+). H147 functions as the Proton acceptor in the catalytic mechanism. The Mg(2+) site is built by D177, H275, and E311.

Belongs to the C-glycoside deglycosidase alpha subunit family. Heterodimer composed of an alpha subunit (CarB) and a beta subunit (CarC). The cofactor is Mg(2+).

The enzyme catalyses 3'-dehydrocarminate + H(+) = kermesate + 1,5-anhydro-D-erythro-hex-1-en-3-ulose. Activity is strongly reduced in the presence of chelating agents. Its function is as follows. Carbon-carbon bond-cleaving enzyme which participates in a carminate degradation pathway. Cleaves the C-C bond in 3'-dehydrocarminate to form kermesate. Also shows weak activity with other C-glycosides, such as 3''-dehydropuerarin (3''-oxo-puerarin), 3''-dehydroisoorientin (3''-oxo-homoorientin) and 3'-dehydromangiferin (3'-oxo-mangiferin). The polypeptide is 3'-dehydrocarminate deglycosidase alpha subunit (Microbacterium sp).